Consider the following 1687-residue polypeptide: PH domain leucine-rich repeat-containing protein phosphatase 1 (1687 aa).

Methionine 1 is modified (N-acetylmethionine). Disordered stretches follow at residues 1–96 (MEPA…GGGA) and 230–406 (AAAP…AAPD). Over residues 78 to 96 (APQPAAGGAAPVPAAGGGA) the composition is skewed to low complexity. The residue at position 286 (serine 286) is a Phosphoserine. Positions 314–326 (DTESFSLSPSAES) are enriched in polar residues. Serine 372 carries the post-translational modification Phosphoserine. The region spanning 492–592 (RIQLSGMYNV…WLRQVSKVAS (101 aa)) is the PH domain. LRR repeat units lie at residues 594–615 (RISS…LFYS), 617–638 (DLTH…PAAR), 648–669 (KLKS…VCSI), 671–692 (TLAE…VGDM), 694–715 (NLQT…LESM), 717–739 (QLSY…EKLT), 740–760 (AVDK…QALR), 764–785 (HIKH…EVDF), 788–809 (HVTQ…IFNN), 829–850 (FLKA…PVPN), 851–872 (YLSY…VCES), 874–895 (KLEV…LFCN), 897–918 (SLRK…LERT), 919–940 (SVEV…LLMK), 943–964 (SLRF…TLSE), 969–989 (ILQE…PLLT), 993–1014 (RLKI…KMAK), 1017–1038 (ELEE…IMNC), 1040–1061 (RMHT…MQLP), 1062–1083 (EVKC…ENLP), and 1085–1106 (KLQE…SLEL). Positions 1131–1378 (SHGYTEASGV…DSISAVVVQL (248 aa)) constitute a PPM-type phosphatase domain. Residues aspartate 1166, glycine 1167, lysine 1330, and aspartate 1369 each coordinate Mn(2+). Disordered regions lie at residues 1414-1465 (DRPS…SSPA) and 1604-1687 (PGGY…DTPL). Residues 1424 to 1445 (SSSSGMASEISSELSTSEMSSE) show a composition bias toward low complexity. A compositionally biased stretch (pro residues) spans 1649 to 1669 (LPPPPQPPQPQPQPQPQPQPQ). The short motif at 1685 to 1687 (TPL) is the PDZ-binding element.

In terms of assembly, interacts with the nucleotide free form of K-Ras (KRAS) via its LRR repeats. Interacts with AKT2, AKT3 and PRKCB. Interacts with WDR48 and USP12. It depends on Mn(2+) as a cofactor. As to expression, isoforms 1 and 2 are expressed in the retina.

The protein resides in the cytoplasm. It localises to the membrane. It is found in the nucleus. It carries out the reaction O-phospho-L-seryl-[protein] + H2O = L-seryl-[protein] + phosphate. The catalysed reaction is O-phospho-L-threonyl-[protein] + H2O = L-threonyl-[protein] + phosphate. Insensitive to okadaic acid. Deubiquitination by WDR48-USP12 complex positively regulates PHLPP1 stability. Its function is as follows. Protein phosphatase involved in regulation of Akt and PKC signaling. Mediates dephosphorylation in the C-terminal domain hydrophobic motif of members of the AGC Ser/Thr protein kinase family; specifically acts on 'Ser-473' of AKT2 and AKT3, 'Ser-660' of PRKCB and 'Ser-657' of PRKCA. Isoform 2 seems to have a major role in regulating Akt signaling in hippocampal neurons. Akt regulates the balance between cell survival and apoptosis through a cascade that primarily alters the function of transcription factors that regulate pro- and antiapoptotic genes. Dephosphorylation of 'Ser-473' of Akt triggers apoptosis and suppression of tumor growth. Dephosphorylation of PRKCA and PRKCB leads to their destabilization and degradation. Dephosphorylates STK4 on 'Thr-387' leading to STK4 activation and apoptosis. Dephosphorylates RPS6KB1 and is involved in regulation of cap-dependent translation. Inhibits cancer cell proliferation and may act as a tumor suppressor. Dephosphorylates RAF1 inhibiting its kinase activity. May act as a negative regulator of K-Ras signaling in membrane rafts. Involved in the hippocampus-dependent long-term memory formation. Involved in circadian control by regulating the consolidation of circadian periodicity after resetting. Involved in development and function of regulatory T-cells. The polypeptide is PH domain leucine-rich repeat-containing protein phosphatase 1 (Phlpp1) (Mus musculus (Mouse)).